A 139-amino-acid polypeptide reads, in one-letter code: uncharacterized protein (139 aa).

A compositionally biased stretch (polar residues) spans 1 to 11 (MALSMSLSSDI). 2 disordered regions span residues 1-80 (MALS…AAAA) and 100-139 (ASSP…LARS). Positions 63–80 (GAGSASAGGSRLAAAAAA) are enriched in low complexity.

This is an uncharacterized protein from Homo sapiens (Human).